Consider the following 427-residue polypeptide: Peptidase B (427 aa).

Residues Lys195 and Asp200 each contribute to the Mn(2+) site. Residue Lys207 is part of the active site. Residues Asp218, Asp277, and Glu279 each contribute to the Mn(2+) site. Arg281 is a catalytic residue.

Belongs to the peptidase M17 family. As to quaternary structure, homohexamer. It depends on Mn(2+) as a cofactor.

The protein localises to the cytoplasm. It carries out the reaction Release of an N-terminal amino acid, Xaa, from a peptide or arylamide. Xaa is preferably Glu or Asp but may be other amino acids, including Leu, Met, His, Cys and Gln.. In terms of biological role, probably plays an important role in intracellular peptide degradation. This chain is Peptidase B, found in Salmonella arizonae (strain ATCC BAA-731 / CDC346-86 / RSK2980).